The primary structure comprises 202 residues: MNNLSKILSGALVLSLSFNGIWAYNTTKEFDKKDKKYRVTVSEKEKQIGDLKVKLEQKDKKINEGGAGENKKEGNSTLDLQNKYREVANQFVHAYLDYSVQNKGERRNNLLKITDKKVVDIVAPNTDDLGDPNFKSHVNKAAIYINSEGDVSKKCTALLDIEYTIEGLENKQTTINSVVKITLEKQGEEIKVVEYNPYPVKR.

This is an uncharacterized protein from Bacillus anthracis.